The following is a 365-amino-acid chain: PR domain zinc finger protein 12 (365 aa).

Positions 86 to 203 (VEVIIAQSSI…PDQELLVWYG (118 aa)) constitute an SET domain. 3 consecutive C2H2-type zinc fingers follow at residues 243–265 (MRCV…MRIH), 271–293 (FVCR…VRLH), and 299–323 (YKCQ…SARH). A disordered region spans residues 318-338 (QKSARHRPPSTALQAHSPALP). Residues 329 to 338 (ALQAHSPALP) are compositionally biased toward low complexity.

Belongs to the class V-like SAM-binding methyltransferase superfamily. As to quaternary structure, interacts with EHMT2.

It localises to the nucleus. Functionally, transcriptional regulator necessary for the development of nociceptive neurons, playing a key role in determining the nociceptive lineage from neural crest cell progenitors. Initiates neurogenesis and activates downstream pro-neuronal transcription factors, such as NEUROD1, BRN3A, and ISL1, specifically within nociceptive neurons, while repressing non-nociceptor cell fates. Essential for the proper function of nociceptors in adults, influencing both their excitability and their gene expression, thereby impacting how these neurons respond to various pain stimuli. This is PR domain zinc finger protein 12 (Prdm12) from Mus musculus (Mouse).